The following is a 192-amino-acid chain: Peptidyl-tRNA hydrolase (192 aa).

Tyrosine 17 lines the tRNA pocket. Residue histidine 22 is the Proton acceptor of the active site. TRNA contacts are provided by tyrosine 68, asparagine 70, and asparagine 116.

Belongs to the PTH family. In terms of assembly, monomer.

The protein resides in the cytoplasm. It carries out the reaction an N-acyl-L-alpha-aminoacyl-tRNA + H2O = an N-acyl-L-amino acid + a tRNA + H(+). Functionally, hydrolyzes ribosome-free peptidyl-tRNAs (with 1 or more amino acids incorporated), which drop off the ribosome during protein synthesis, or as a result of ribosome stalling. Catalyzes the release of premature peptidyl moieties from peptidyl-tRNA molecules trapped in stalled 50S ribosomal subunits, and thus maintains levels of free tRNAs and 50S ribosomes. The protein is Peptidyl-tRNA hydrolase of Mycolicibacterium gilvum (strain PYR-GCK) (Mycobacterium gilvum (strain PYR-GCK)).